The chain runs to 455 residues: Glutamate-1-semialdehyde 2,1-aminomutase (455 aa).

Lysine 286 bears the N6-(pyridoxal phosphate)lysine mark.

It belongs to the class-III pyridoxal-phosphate-dependent aminotransferase family. HemL subfamily. In terms of assembly, homodimer. Requires pyridoxal 5'-phosphate as cofactor.

The protein localises to the cytoplasm. It carries out the reaction (S)-4-amino-5-oxopentanoate = 5-aminolevulinate. It functions in the pathway porphyrin-containing compound metabolism; protoporphyrin-IX biosynthesis; 5-aminolevulinate from L-glutamyl-tRNA(Glu): step 2/2. The sequence is that of Glutamate-1-semialdehyde 2,1-aminomutase from Clavibacter sepedonicus (Clavibacter michiganensis subsp. sepedonicus).